A 547-amino-acid polypeptide reads, in one-letter code: Probable terpene synthase 3 (547 aa).

Positions 298, 302, and 451 each coordinate Mg(2+). The DDXXD motif signature appears at 298–302 (DDIYD).

It belongs to the terpene synthase family. Mg(2+) is required as a cofactor.

Probable sesquiterpene synthase. The sequence is that of Probable terpene synthase 3 (TPS3) from Ricinus communis (Castor bean).